The primary structure comprises 471 residues: Nuclear distribution protein PAC1 (471 aa).

The LisH domain maps to glutamine 9–valine 41. Residues threonine 60–threonine 87 are a coiled coil. Positions leucine 83–arginine 93 are enriched in polar residues. The interval leucine 83–arginine 108 is disordered. WD repeat units lie at residues serine 113 to lysine 154, histidine 156 to arginine 196, glycine 200 to threonine 247, glycine 250 to threonine 289, glycine 292 to leucine 352, glycine 354 to arginine 393, alanine 398 to glutamine 428, and glycine 429 to arginine 467. Positions glycine 424 to glycine 449 are disordered. Polar residues predominate over residues glutamine 428 to threonine 441.

It belongs to the WD repeat LIS1/nudF family. Self-associates. Interacts with NDL1 and dynein.

The protein resides in the cytoplasm. The protein localises to the cytoskeleton. Its subcellular location is the spindle pole. Functionally, positively regulates the activity of the minus-end directed microtubule motor protein dynein. May enhance dynein-mediated microtubule sliding by targeting dynein to the microtubule plus end. Required for nuclear migration during vegetative growth as well as development. Required for retrograde early endosome (EE) transport from the hyphal tip. Required for localization of dynein to the mitotic spindle poles. Recruits additional proteins to the dynein complex at SPBs. In Coccidioides posadasii (strain C735) (Valley fever fungus), this protein is Nuclear distribution protein PAC1.